The primary structure comprises 167 residues: Endoribonuclease YbeY (167 aa).

His132, His136, and His142 together coordinate Zn(2+).

The protein belongs to the endoribonuclease YbeY family. The cofactor is Zn(2+).

It localises to the cytoplasm. In terms of biological role, single strand-specific metallo-endoribonuclease involved in late-stage 70S ribosome quality control and in maturation of the 3' terminus of the 16S rRNA. The chain is Endoribonuclease YbeY from Clostridium beijerinckii (strain ATCC 51743 / NCIMB 8052) (Clostridium acetobutylicum).